The sequence spans 262 residues: 3-methyl-2-oxobutanoate hydroxymethyltransferase (262 aa).

Residues aspartate 44 and aspartate 83 each contribute to the Mg(2+) site. Residues 44 to 45 (DS), aspartate 83, and lysine 112 contribute to the 3-methyl-2-oxobutanoate site. Residue glutamate 114 coordinates Mg(2+). The Proton acceptor role is filled by glutamate 180.

Belongs to the PanB family. In terms of assembly, homodecamer; pentamer of dimers. The cofactor is Mg(2+).

It localises to the cytoplasm. The catalysed reaction is 3-methyl-2-oxobutanoate + (6R)-5,10-methylene-5,6,7,8-tetrahydrofolate + H2O = 2-dehydropantoate + (6S)-5,6,7,8-tetrahydrofolate. The protein operates within cofactor biosynthesis; (R)-pantothenate biosynthesis; (R)-pantoate from 3-methyl-2-oxobutanoate: step 1/2. Catalyzes the reversible reaction in which hydroxymethyl group from 5,10-methylenetetrahydrofolate is transferred onto alpha-ketoisovalerate to form ketopantoate. The sequence is that of 3-methyl-2-oxobutanoate hydroxymethyltransferase from Chromobacterium violaceum (strain ATCC 12472 / DSM 30191 / JCM 1249 / CCUG 213 / NBRC 12614 / NCIMB 9131 / NCTC 9757 / MK).